Reading from the N-terminus, the 144-residue chain is 3-hydroxyacyl-[acyl-carrier-protein] dehydratase FabZ (144 aa).

The active site involves H51.

This sequence belongs to the thioester dehydratase family. FabZ subfamily.

The protein resides in the cytoplasm. It carries out the reaction a (3R)-hydroxyacyl-[ACP] = a (2E)-enoyl-[ACP] + H2O. In terms of biological role, involved in unsaturated fatty acids biosynthesis. Catalyzes the dehydration of short chain beta-hydroxyacyl-ACPs and long chain saturated and unsaturated beta-hydroxyacyl-ACPs. This chain is 3-hydroxyacyl-[acyl-carrier-protein] dehydratase FabZ, found in Lactococcus lactis subsp. cremoris (strain SK11).